A 129-amino-acid polypeptide reads, in one-letter code: Large ribosomal subunit protein bL12 (129 aa).

This sequence belongs to the bacterial ribosomal protein bL12 family. As to quaternary structure, homodimer. Part of the ribosomal stalk of the 50S ribosomal subunit. Forms a multimeric L10(L12)X complex, where L10 forms an elongated spine to which 2 to 4 L12 dimers bind in a sequential fashion. Binds GTP-bound translation factors.

In terms of biological role, forms part of the ribosomal stalk which helps the ribosome interact with GTP-bound translation factors. Is thus essential for accurate translation. This chain is Large ribosomal subunit protein bL12, found in Maridesulfovibrio salexigens (strain ATCC 14822 / DSM 2638 / NCIMB 8403 / VKM B-1763) (Desulfovibrio salexigens).